The following is a 691-amino-acid chain: Elongation factor G (691 aa).

One can recognise a tr-type G domain in the interval 8 to 283; sequence EDYRNFGIMA…AVVDYLPSPA (276 aa). GTP contacts are provided by residues 17-24, 81-85, and 135-138; these read AHIDAGKT, DTPGH, and NKMD.

Belongs to the TRAFAC class translation factor GTPase superfamily. Classic translation factor GTPase family. EF-G/EF-2 subfamily.

Its subcellular location is the cytoplasm. Catalyzes the GTP-dependent ribosomal translocation step during translation elongation. During this step, the ribosome changes from the pre-translocational (PRE) to the post-translocational (POST) state as the newly formed A-site-bound peptidyl-tRNA and P-site-bound deacylated tRNA move to the P and E sites, respectively. Catalyzes the coordinated movement of the two tRNA molecules, the mRNA and conformational changes in the ribosome. This chain is Elongation factor G, found in Methylobacterium radiotolerans (strain ATCC 27329 / DSM 1819 / JCM 2831 / NBRC 15690 / NCIMB 10815 / 0-1).